A 252-amino-acid chain; its full sequence is dITP/XTP pyrophosphatase (252 aa).

Substrate is bound at residue T7–K12. D74 functions as the Proton acceptor in the catalytic mechanism. D74 serves as a coordination point for Mg(2+). Residues S75 and F193–D196 each bind substrate. The disordered stretch occupies residues P201 to E224. Residues K230 and H235–R236 each bind substrate.

The protein belongs to the HAM1 NTPase family. As to quaternary structure, homodimer. Mg(2+) is required as a cofactor.

The enzyme catalyses XTP + H2O = XMP + diphosphate + H(+). It carries out the reaction dITP + H2O = dIMP + diphosphate + H(+). The catalysed reaction is ITP + H2O = IMP + diphosphate + H(+). Its function is as follows. Pyrophosphatase that catalyzes the hydrolysis of nucleoside triphosphates to their monophosphate derivatives, with a high preference for the non-canonical purine nucleotides XTP (xanthosine triphosphate), dITP (deoxyinosine triphosphate) and ITP. Seems to function as a house-cleaning enzyme that removes non-canonical purine nucleotides from the nucleotide pool, thus preventing their incorporation into DNA/RNA and avoiding chromosomal lesions. This chain is dITP/XTP pyrophosphatase, found in Bifidobacterium longum subsp. infantis (strain ATCC 15697 / DSM 20088 / JCM 1222 / NCTC 11817 / S12).